Here is a 160-residue protein sequence, read N- to C-terminus: SsrA-binding protein (160 aa).

Residues 132-160 (KEFDKRDTMRERDSNRELQRAVRNKGKEE) form a disordered region.

It belongs to the SmpB family.

The protein localises to the cytoplasm. Required for rescue of stalled ribosomes mediated by trans-translation. Binds to transfer-messenger RNA (tmRNA), required for stable association of tmRNA with ribosomes. tmRNA and SmpB together mimic tRNA shape, replacing the anticodon stem-loop with SmpB. tmRNA is encoded by the ssrA gene; the 2 termini fold to resemble tRNA(Ala) and it encodes a 'tag peptide', a short internal open reading frame. During trans-translation Ala-aminoacylated tmRNA acts like a tRNA, entering the A-site of stalled ribosomes, displacing the stalled mRNA. The ribosome then switches to translate the ORF on the tmRNA; the nascent peptide is terminated with the 'tag peptide' encoded by the tmRNA and targeted for degradation. The ribosome is freed to recommence translation, which seems to be the essential function of trans-translation. The protein is SsrA-binding protein of Pseudomonas putida (strain ATCC 47054 / DSM 6125 / CFBP 8728 / NCIMB 11950 / KT2440).